The chain runs to 957 residues: Dystrophin-related protein 2 (957 aa).

2 Spectrin repeats span residues 102–179 and 231–337; these read DHSG…EELE and EHLL…QLQD. The WW domain maps to 358 to 383; that stretch reads WERAISPNKVPYYINHQAQTTCWDHP. A ZZ-type; degenerate zinc finger spans residues 605–661; the sequence is KHQTKCSICRQCPIKGFRYRSLKQFNVDICQTCFLTGKASKGNKLHYPIMEYYTPTT. Zn(2+)-binding residues include C610, C613, C634, and C637. S748 bears the Phosphoserine mark. The span at 877 to 894 shows a compositional bias: low complexity; sequence PPTESDGNGSAGSSLASS. The disordered stretch occupies residues 877–923; sequence PPTESDGNGSAGSSLASSPRQSEGSHPREKGQTTPDTEAADDVGSKS. T910 bears the Phosphothreonine mark.

Interacts with PRX; this enhances phosphorylation. Identified in a dystroglycan complex that contains at least PRX, DRP2, UTRN, DMD and DAG1. As to expression, detected in trigeminal nerve Schwann cells. Detected in brain cortex and hippocampus. Detected in brain membrane fractions and highly enriched in the postsynaptic density (at protein level).

The protein resides in the postsynaptic density. It localises to the cell projection. The protein localises to the dendrite. Its subcellular location is the perikaryon. It is found in the cell membrane. Its function is as follows. Required for normal myelination and for normal organization of the cytoplasm and the formation of Cajal bands in myelinating Schwann cells. Required for normal PRX location at appositions between the abaxonal surface of the myelin sheath and the Schwann cell plasma membrane. Possibly involved in membrane-cytoskeleton interactions of the central nervous system. The protein is Dystrophin-related protein 2 (Drp2) of Rattus norvegicus (Rat).